Consider the following 160-residue polypeptide: Cyclic pyranopterin monophosphate synthase (160 aa).

Substrate contacts are provided by residues 77–79 (MCH) and 114–115 (ME). The active site involves Asp129.

The protein belongs to the MoaC family. In terms of assembly, homohexamer; trimer of dimers.

The enzyme catalyses (8S)-3',8-cyclo-7,8-dihydroguanosine 5'-triphosphate = cyclic pyranopterin phosphate + diphosphate. It participates in cofactor biosynthesis; molybdopterin biosynthesis. In terms of biological role, catalyzes the conversion of (8S)-3',8-cyclo-7,8-dihydroguanosine 5'-triphosphate to cyclic pyranopterin monophosphate (cPMP). In Listeria welshimeri serovar 6b (strain ATCC 35897 / DSM 20650 / CCUG 15529 / CIP 8149 / NCTC 11857 / SLCC 5334 / V8), this protein is Cyclic pyranopterin monophosphate synthase.